A 736-amino-acid polypeptide reads, in one-letter code: Microtubule-associated protein mu-2 (736 aa).

Belongs to the orthoreovirus mu-2 protein family. As to quaternary structure, interacts with protein mu-NS; in viral inclusions. Interacts with polymerase lambda-3; this interaction stimulates the ATPase activity of mu-2. The cofactor is a divalent metal cation.

The protein resides in the virion. It localises to the host cytoplasm. The protein localises to the host cytoskeleton. Functionally, minor inner capsid (core) component. Displays NTPase and RNA 5'-triphosphatase (RTPase) activities. ATP is the preferred substrate for hydrolysis. May function as a cofactor of polymerase lambda-3. Associates with microtubules and plays a role in the formation, structural organization and morphology of viral inclusions, where the assembly of cores and the replication of viral RNA occur. Together with mu-NS, recruits the other core proteins to these inclusions. In Mammalia (T2J), this protein is Microtubule-associated protein mu-2 (M1).